Reading from the N-terminus, the 256-residue chain is MKPESGQALFHVALASCLCVATVHTGIFEHVSVQVGYEYYAEAPVTSLPAFLAMPFNSLVNMAYVFLGVYWLRSQARAPGGPAERRRARYLKDVFAGMALVYGPVQWLRIGMQTQPTAVLDQWLTLPIFAWPVAWCLCLDRGWKPWLFLAVEGLSLCSYSLALLHPHGFELALGLHIAAAVGQALRIQGRHGNISSGTYLALGVLSCLGFVVLKLCDHELAQWHLFQQLTGHFWSKVCDVLQFHFAFLFLTSLHTC.

Transmembrane regions (helical) follow at residues 8 to 28, 51 to 71, 94 to 112, 119 to 139, 146 to 168, 193 to 213, and 233 to 253; these read ALFH…TGIF, FLAM…GVYW, VFAG…RIGM, VLDQ…CLCL, WLFL…HPHG, NISS…FVVL, and FWSK…LTSL.

Its subcellular location is the membrane. The protein is Transmembrane protein 187 (TMEM187) of Bos taurus (Bovine).